An 86-amino-acid polypeptide reads, in one-letter code: High affinity immunoglobulin epsilon receptor subunit gamma (86 aa).

A signal peptide spans 1-18; sequence MISAVILFLLLLVEQAAA. The Extracellular portion of the chain corresponds to 19–23; it reads LGEPQ. The chain crosses the membrane as a helical span at residues 24 to 44; that stretch reads LCYILDAVLFLYGIVLTLLYC. The Cytoplasmic portion of the chain corresponds to 45 to 86; sequence RLKIQVRKAAIASREKADAVYTGLNTRSQETYETLKHEKPPQ. Positions 54–82 constitute an ITAM domain; the sequence is AIASREKADAVYTGLNTRSQETYETLKHE. Tyrosine 65 and tyrosine 76 each carry phosphotyrosine. Threonine 78 is modified (phosphothreonine).

This sequence belongs to the CD3Z/FCER1G family. In terms of assembly, igE Fc receptor is a tetramer of an alpha chain, a beta chain, and two disulfide linked gamma chains. Associates with FCGR1A; forms a functional signaling complex. The signaling subunit of immunoglobulin gamma (IgG) Fc receptor complex. As a homodimer or a heterodimer of CD247 and FCER1G, associates with the ligand binding subunit FCGR3A to form a functional receptor complex. Associates with CLEC6A. Interacts with CLEC4E. Interacts (via ITAM domain) with SYK (via SH2 domains); activates SYK, enabling integrin-mediated activation of neutrophils and macrophages. Interacts with CSF2RB and recruits SYK in response to IL3 stimulation; this interaction is direct. Interacts with CD300LH; the interaction may be indirect. Interacts with CD300LD. Interacts with TARM1. In terms of tissue distribution, expressed in mast cells (at protein level). Expressed in basophils (at protein level).

It is found in the cell membrane. In terms of biological role, adapter protein containing an immunoreceptor tyrosine-based activation motif (ITAM) that transduces activation signals from various immunoreceptors. As a component of the high-affinity immunoglobulin E (IgE) receptor, mediates allergic inflammatory signaling in mast cells. As a constitutive component of interleukin-3 receptor complex, selectively mediates interleukin 4/IL4 production by basophils, priming T-cells toward effector T-helper 2 subset. Associates with pattern recognition receptors CLEC4D and CLEC4E to form a functional signaling complex in myeloid cells. Binding of mycobacterial trehalose 6,6'-dimycolate (TDM) to this receptor complex leads to phosphorylation of ITAM, triggering activation of SYK, CARD9 and NF-kappa-B, consequently driving maturation of antigen-presenting cells and shaping antigen-specific priming of T-cells toward effector T-helper 1 and T-helper 17 cell subtypes. May function cooperatively with other activating receptors. Functionally linked to integrin beta-2/ITGB2-mediated neutrophil activation. Also involved in integrin alpha-2/ITGA2-mediated platelet activation. In Mus musculus (Mouse), this protein is High affinity immunoglobulin epsilon receptor subunit gamma.